The sequence spans 284 residues: Bifunctional protein FolD (284 aa).

Residues 165-167, Ser-190, and Ile-231 each bind NADP(+); that span reads GRS.

Belongs to the tetrahydrofolate dehydrogenase/cyclohydrolase family. Homodimer.

The catalysed reaction is (6R)-5,10-methylene-5,6,7,8-tetrahydrofolate + NADP(+) = (6R)-5,10-methenyltetrahydrofolate + NADPH. It catalyses the reaction (6R)-5,10-methenyltetrahydrofolate + H2O = (6R)-10-formyltetrahydrofolate + H(+). It functions in the pathway one-carbon metabolism; tetrahydrofolate interconversion. Catalyzes the oxidation of 5,10-methylenetetrahydrofolate to 5,10-methenyltetrahydrofolate and then the hydrolysis of 5,10-methenyltetrahydrofolate to 10-formyltetrahydrofolate. The chain is Bifunctional protein FolD from Streptococcus thermophilus (strain CNRZ 1066).